The following is a 387-amino-acid chain: G-protein coupled receptor homolog R33 (387 aa).

Over 1–33 (MDVLLGTEELEDELHQLHFNYTCVPSLGLSVAR) the chain is Extracellular. N-linked (GlcNAc...) asparagine; by host glycosylation occurs at Asn20. The chain crosses the membrane as a helical span at residues 34 to 61 (DAETAVNFLIVLVGGPMNFLVLATQMLS). The Cytoplasmic segment spans residues 62-71 (NRSYSVSTPT). The chain crosses the membrane as a helical span at residues 72 to 94 (LYMTNLYLANLLTVATLPFLMLS). The Extracellular segment spans residues 95–107 (NRGLVGSSPEGCK). A helical transmembrane segment spans residues 108 to 129 (IAALAYYATCTAGFATLMLIAI). Over 130–150 (NRYRVIHQRTRSGAGSKRQTY) the chain is Cytoplasmic. The helical transmembrane segment at 151–169 (AVLAVTWLASLMCASPAPL) threads the bilayer. Residues 170–204 (YATVMAHDSADALAFETCIIYFSYDQVKTVLATFK) lie on the Extracellular side of the membrane. Residues 205–224 (ILITMIWGITPVVMMSWFYV) form a helical membrane-spanning segment. Over 225-244 (FFYRRLKLTSYRRRSQTLTF) the chain is Cytoplasmic. The chain crosses the membrane as a helical span at residues 245–268 (VTTLMLSFLVVQTPFVAIMSYDSY). Topologically, residues 269-285 (GVLNWPINCDTINKRDA) are extracellular. Residues 286–309 (VSMLARVVPNFHCLLNPVLYAFLG) traverse the membrane as a helical segment. Over 310–387 (RDFNKRFILC…PPPPPPPPNC (78 aa)) the chain is Cytoplasmic. The interval 368-387 (RLRALGRPPPPPPPPPPPNC) is disordered. Positions 374–387 (RPPPPPPPPPPPNC) are enriched in pro residues.

Belongs to the G-protein coupled receptor 1 family.

It localises to the host cell membrane. Plays an important role in vivo, in particular in the dissemination to or replication in the salivary gland. This Rattus protein is G-protein coupled receptor homolog R33.